Consider the following 142-residue polypeptide: Ig heavy chain V region IR2 (142 aa).

An N-terminal signal peptide occupies residues 1–19; that stretch reads MDLRLTYVFIVAILKGVLC. One can recognise an Ig-like domain in the interval 20–133; that stretch reads EVKLEESGGG…YSENWFVYWG (114 aa).

The polypeptide is Ig heavy chain V region IR2 (Rattus norvegicus (Rat)).